Reading from the N-terminus, the 336-residue chain is DNA repair protein RAD51 homolog B (336 aa).

Positions 45–74 constitute a HhH domain; that stretch reads TVEAVAYAPKKELLNIKGISEAKAEKILAE. 124 to 131 contributes to the ATP binding site; sequence GEFRTGKT. Positions 242–257 match the Nuclear export signal motif; the sequence is LARFLRMLLRLADEFG.

It belongs to the RecA family. RAD51 subfamily. Forms linear homooligomers, giving rise to a RAD51 nucleoprotein filament, which is essential for strand-pairing reactions during DNA recombination.

The protein resides in the nucleus. It localises to the cytoplasm. It is found in the chromosome. In terms of biological role, plays an important role in homologous strand exchange, a key step in DNA repair through homologous recombination (HR). Binds to single-stranded DNA in an ATP-dependent manner to form nucleoprotein filaments which are essential for the homology search and strand exchange. Catalyzes the recognition of homology and strand exchange between homologous DNA partners to form a joint molecule between a processed DNA break and the repair template. Recruited to resolve stalled replication forks during replication stress. Also involved in interstrand cross-link repair. This Xenopus laevis (African clawed frog) protein is DNA repair protein RAD51 homolog B (rad51-b).